We begin with the raw amino-acid sequence, 295 residues long: uncharacterized protein (295 aa).

The span at 57 to 67 (RKLLVKQKRKS) shows a compositional bias: basic residues. The segment at 57–94 (RKLLVKQKRKSNKEFQSNIIKKRKDEERKGTLKTEQAN) is disordered. Positions 79-88 (RKDEERKGTL) are enriched in basic and acidic residues. 2 coiled-coil regions span residues 87–116 (TLKT…YDQY) and 259–286 (DVLT…LGER).

The protein localises to the nucleus. This is an uncharacterized protein from Schizosaccharomyces pombe (strain 972 / ATCC 24843) (Fission yeast).